Here is a 459-residue protein sequence, read N- to C-terminus: LETM1 domain-containing protein LETM2, mitochondrial (459 aa).

The transit peptide at Met-1–Pro-25 directs the protein to the mitochondrion. Over Cys-26–Arg-176 the chain is Mitochondrial intermembrane. The tract at residues Gly-88–Val-114 is disordered. Positions Glu-97 to Gln-111 are enriched in basic and acidic residues. A helical membrane pass occupies residues Leu-177–Leu-197. Over Lys-198–Ala-459 the chain is Mitochondrial matrix. The region spanning Lys-220–Ile-440 is the Letm1 RBD domain. Residues Leu-403–Ala-459 are disordered. Over residues Leu-435–Ala-459 the composition is skewed to polar residues.

In terms of tissue distribution, testis and sperm.

It localises to the mitochondrion inner membrane. The protein is LETM1 domain-containing protein LETM2, mitochondrial (Letm2) of Rattus norvegicus (Rat).